The sequence spans 231 residues: 2-C-methyl-D-erythritol 4-phosphate cytidylyltransferase (231 aa).

This sequence belongs to the IspD/TarI cytidylyltransferase family. IspD subfamily.

It carries out the reaction 2-C-methyl-D-erythritol 4-phosphate + CTP + H(+) = 4-CDP-2-C-methyl-D-erythritol + diphosphate. It functions in the pathway isoprenoid biosynthesis; isopentenyl diphosphate biosynthesis via DXP pathway; isopentenyl diphosphate from 1-deoxy-D-xylulose 5-phosphate: step 2/6. Functionally, catalyzes the formation of 4-diphosphocytidyl-2-C-methyl-D-erythritol from CTP and 2-C-methyl-D-erythritol 4-phosphate (MEP). This is 2-C-methyl-D-erythritol 4-phosphate cytidylyltransferase from Clostridium kluyveri (strain NBRC 12016).